The following is a 1057-amino-acid chain: Carbamoyl phosphate synthase large chain (1057 aa).

Residues methionine 1–glutamate 401 are carboxyphosphate synthetic domain. Arginine 129, arginine 169, glycine 175, glycine 176, lysine 208, isoleucine 210, glutamate 215, glycine 241, isoleucine 242, histidine 243, glutamine 284, and glutamate 298 together coordinate ATP. The ATP-grasp 1 domain occupies arginine 133 to valine 327. Mg(2+) is bound by residues glutamine 284, glutamate 298, and asparagine 300. Mn(2+) is bound by residues glutamine 284, glutamate 298, and asparagine 300. The segment at tyrosine 402–serine 546 is oligomerization domain. Residues isoleucine 547–glycine 929 form a carbamoyl phosphate synthetic domain region. The region spanning glutamate 671–isoleucine 861 is the ATP-grasp 2 domain. ATP-binding residues include arginine 707, arginine 746, leucine 748, glutamate 752, glycine 777, valine 778, histidine 779, serine 780, glutamine 820, and glutamate 832. Positions 820, 832, and 834 each coordinate Mg(2+). The Mn(2+) site is built by glutamine 820, glutamate 832, and asparagine 834. Positions valine 930–methionine 1057 constitute an MGS-like domain. An allosteric domain region spans residues valine 930–methionine 1057.

Belongs to the CarB family. As to quaternary structure, composed of two chains; the small (or glutamine) chain promotes the hydrolysis of glutamine to ammonia, which is used by the large (or ammonia) chain to synthesize carbamoyl phosphate. Tetramer of heterodimers (alpha,beta)4. The cofactor is Mg(2+). Mn(2+) is required as a cofactor.

It carries out the reaction hydrogencarbonate + L-glutamine + 2 ATP + H2O = carbamoyl phosphate + L-glutamate + 2 ADP + phosphate + 2 H(+). It catalyses the reaction hydrogencarbonate + NH4(+) + 2 ATP = carbamoyl phosphate + 2 ADP + phosphate + 2 H(+). Its pathway is amino-acid biosynthesis; L-arginine biosynthesis; carbamoyl phosphate from bicarbonate: step 1/1. It participates in pyrimidine metabolism; UMP biosynthesis via de novo pathway; (S)-dihydroorotate from bicarbonate: step 1/3. Large subunit of the glutamine-dependent carbamoyl phosphate synthetase (CPSase). CPSase catalyzes the formation of carbamoyl phosphate from the ammonia moiety of glutamine, carbonate, and phosphate donated by ATP, constituting the first step of 2 biosynthetic pathways, one leading to arginine and/or urea and the other to pyrimidine nucleotides. The large subunit (synthetase) binds the substrates ammonia (free or transferred from glutamine from the small subunit), hydrogencarbonate and ATP and carries out an ATP-coupled ligase reaction, activating hydrogencarbonate by forming carboxy phosphate which reacts with ammonia to form carbamoyl phosphate. The chain is Carbamoyl phosphate synthase large chain from Staphylococcus aureus (strain MRSA252).